A 125-amino-acid polypeptide reads, in one-letter code: Fluoride-specific ion channel FluC (125 aa).

The next 4 helical transmembrane spans lie at 1-21, 32-52, 68-88, and 101-121; these read MIQALLVAVGGAIGSLLRYYV, AFPWGTLAVNVVGCFVIGVFA, LLITGFLGGFTTFSAFSLDAI, and IYTVASVGLSMAAVMAGLAVM. 2 residues coordinate Na(+): Gly-75 and Thr-78.

Belongs to the fluoride channel Fluc/FEX (TC 1.A.43) family.

The protein resides in the cell inner membrane. It carries out the reaction fluoride(in) = fluoride(out). Its activity is regulated as follows. Na(+) is not transported, but it plays an essential structural role and its presence is essential for fluoride channel function. In terms of biological role, fluoride-specific ion channel. Important for reducing fluoride concentration in the cell, thus reducing its toxicity. The chain is Fluoride-specific ion channel FluC from Rhizobium leguminosarum bv. trifolii (strain WSM2304).